Here is a 226-residue protein sequence, read N- to C-terminus: NADH-ubiquinone oxidoreductase 19.3 kDa subunit, mitochondrial (226 aa).

The interval 40 to 68 (ATGAVAPAGAQHGIARRERREVPLPSQEG) is disordered. [4Fe-4S] cluster contacts are provided by C101, C102, C166, and C196.

This sequence belongs to the complex I 20 kDa subunit family. In terms of assembly, complex I is composed of about 40 different subunits. This is a component of the iron-sulfur (IP) fragment of the enzyme. Requires [4Fe-4S] cluster as cofactor.

Its subcellular location is the mitochondrion. The catalysed reaction is a ubiquinone + NADH + 5 H(+)(in) = a ubiquinol + NAD(+) + 4 H(+)(out). Functionally, core subunit of the mitochondrial membrane respiratory chain NADH dehydrogenase (Complex I) that is believed to belong to the minimal assembly required for catalysis. Complex I functions in the transfer of electrons from NADH to the respiratory chain. The immediate electron acceptor for the enzyme is believed to be ubiquinone. In Neurospora crassa (strain ATCC 24698 / 74-OR23-1A / CBS 708.71 / DSM 1257 / FGSC 987), this protein is NADH-ubiquinone oxidoreductase 19.3 kDa subunit, mitochondrial.